Reading from the N-terminus, the 344-residue chain is UDP-3-O-acylglucosamine N-acyltransferase (344 aa).

His248 (proton acceptor) is an active-site residue.

The protein belongs to the transferase hexapeptide repeat family. LpxD subfamily. Homotrimer.

It catalyses the reaction a UDP-3-O-[(3R)-3-hydroxyacyl]-alpha-D-glucosamine + a (3R)-hydroxyacyl-[ACP] = a UDP-2-N,3-O-bis[(3R)-3-hydroxyacyl]-alpha-D-glucosamine + holo-[ACP] + H(+). Its pathway is bacterial outer membrane biogenesis; LPS lipid A biosynthesis. Its function is as follows. Catalyzes the N-acylation of UDP-3-O-acylglucosamine using 3-hydroxyacyl-ACP as the acyl donor. Is involved in the biosynthesis of lipid A, a phosphorylated glycolipid that anchors the lipopolysaccharide to the outer membrane of the cell. In Prochlorococcus marinus (strain MIT 9312), this protein is UDP-3-O-acylglucosamine N-acyltransferase.